The following is a 129-amino-acid chain: Follitropin subunit beta (129 aa).

The first 18 residues, 1–18 (MKSVQLCLLLWCWRAICC), serve as a signal peptide directing secretion. 6 disulfides stabilise this stretch: Cys-21–Cys-69, Cys-35–Cys-84, Cys-38–Cys-122, Cys-46–Cys-100, Cys-50–Cys-102, and Cys-105–Cys-112. Asn-25 and Asn-42 each carry an N-linked (GlcNAc...) asparagine glycan.

The protein belongs to the glycoprotein hormones subunit beta family. In terms of assembly, heterodimer. The active follitropin is a heterodimer composed of an alpha chain/CGA shared with other hormones and a unique beta chain/FSHB shown here.

It localises to the secreted. Functionally, together with the alpha chain CGA constitutes follitropin, the follicle-stimulating hormone, and provides its biological specificity to the hormone heterodimer. Binds FSHR, a G protein-coupled receptor, on target cells to activate downstream signaling pathways. Follitropin is involved in follicle development and spermatogenesis in reproductive organs. This is Follitropin subunit beta (FSHB) from Meriones unguiculatus (Mongolian jird).